The following is a 121-amino-acid chain: ATP synthase epsilon chain (121 aa).

The protein belongs to the ATPase epsilon chain family. In terms of assembly, F-type ATPases have 2 components, CF(1) - the catalytic core - and CF(0) - the membrane proton channel. CF(1) has five subunits: alpha(3), beta(3), gamma(1), delta(1), epsilon(1). CF(0) has three main subunits: a, b and c.

It localises to the cell membrane. Functionally, produces ATP from ADP in the presence of a proton gradient across the membrane. This Mycobacterium avium (strain 104) protein is ATP synthase epsilon chain.